Consider the following 121-residue polypeptide: Large ribosomal subunit protein uL18 (121 aa).

Belongs to the universal ribosomal protein uL18 family. As to quaternary structure, part of the 50S ribosomal subunit; part of the 5S rRNA/L5/L18/L25 subcomplex. Contacts the 5S and 23S rRNAs.

Its function is as follows. This is one of the proteins that bind and probably mediate the attachment of the 5S RNA into the large ribosomal subunit, where it forms part of the central protuberance. The chain is Large ribosomal subunit protein uL18 from Bdellovibrio bacteriovorus (strain ATCC 15356 / DSM 50701 / NCIMB 9529 / HD100).